An 83-amino-acid polypeptide reads, in one-letter code: Mu-conotoxin-like PnMKLT1-014 (83 aa).

Positions 1–22 (MNLTCMMIVAVLFLTAWTFVMA) are cleaved as a signal peptide. Residues 23 to 50 (DDSNNGLANLFSKSRYEMEDPEPSKLEK) constitute a propeptide that is removed on maturation. 3 disulfide bridges follow: Cys54-Cys72, Cys61-Cys77, and Cys71-Cys82.

This sequence belongs to the conotoxin O1 superfamily. As to expression, expressed by the venom duct.

The protein resides in the secreted. In terms of biological role, mu-conotoxins block voltage-gated sodium channels (Nav). The chain is Mu-conotoxin-like PnMKLT1-014 from Conus pennaceus (Feathered cone).